A 53-amino-acid polypeptide reads, in one-letter code: Ferredoxin B (53 aa).

Residues 1–35 (GIDPNYRSLPVVKEEQGVKIYGTYEPPTKLGIWGT) form an N-terminal extension region. Lys29 is subject to N6-methyllysine. The 20-residue stretch at 34–53 (GTIVGVDFDLCIADGSCINA) folds into the 4Fe-4S ferredoxin-type 1 domain. [3Fe-4S] cluster contacts are provided by Cys44 and Cys50.

[3Fe-4S] cluster is required as a cofactor. It depends on [4Fe-4S] cluster as a cofactor.

Functionally, ferredoxins are iron-sulfur proteins that transfer electrons in a wide variety of metabolic reactions. In Sulfuracidifex metallicus (Sulfolobus metallicus), this protein is Ferredoxin B.